A 545-amino-acid polypeptide reads, in one-letter code: T-complex protein 1 subunit gamma (545 aa).

Methionine 1 carries the N-acetylmethionine modification. The segment at 1–24 is disordered; it reads MMGHRPVLVLSQNTKRESGRKVQS. Serine 11 carries the post-translational modification Phosphoserine. Lysine 15 participates in a covalent cross-link: Glycyl lysine isopeptide (Lys-Gly) (interchain with G-Cter in SUMO2). Residue glycine 42 coordinates ADP. Glycine 42 is an ATP binding site. Aspartate 93 contacts Mg(2+). Residues glycine 94, threonine 95, threonine 96, serine 97, threonine 162, and lysine 163 each contribute to the ADP site. Residues glycine 94, threonine 95, and threonine 96 each coordinate ATP. Serine 170 is subject to Phosphoserine. Lysine 222 bears the N6-acetyllysine mark. Residues serine 243 and serine 244 each carry the phosphoserine modification. Position 247 is a phosphotyrosine (tyrosine 247). Residues lysine 248 and lysine 249 each participate in a glycyl lysine isopeptide (Lys-Gly) (interchain with G-Cter in SUMO2) cross-link. The residue at position 252 (serine 252) is a Phosphoserine. Cysteines 366 and 372 form a disulfide. A Glycyl lysine isopeptide (Lys-Gly) (interchain with G-Cter in SUMO2) cross-link involves residue lysine 381. Glycine 411 contacts ADP. Glycine 411 contributes to the ATP binding site. Residues threonine 430 and threonine 459 each carry the phosphothreonine modification. ADP contacts are provided by glycine 482, glutamate 483, glutamate 497, and lysine 502. ATP is bound at residue glycine 482. Glutamate 497 is a binding site for ATP. Positions 526–545 are disordered; sequence HKKKGDDQSRQGGAPDAGQE.

The protein belongs to the TCP-1 chaperonin family. Component of the chaperonin-containing T-complex (TRiC), a hexadecamer composed of two identical back-to-back stacked rings enclosing a protein folding chamber. Each ring is made up of eight different subunits: TCP1/CCT1, CCT2, CCT3, CCT4, CCT5, CCT6A/CCT6, CCT7, CCT8. Interacts with PACRG. Interacts with DNAAF4. Interacts with DLEC1.

The protein localises to the cytoplasm. The enzyme catalyses ATP + H2O = ADP + phosphate + H(+). In terms of biological role, component of the chaperonin-containing T-complex (TRiC), a molecular chaperone complex that assists the folding of actin, tubulin and other proteins upon ATP hydrolysis. The TRiC complex mediates the folding of WRAP53/TCAB1, thereby regulating telomere maintenance. As part of the TRiC complex may play a role in the assembly of BBSome, a complex involved in ciliogenesis regulating transports vesicles to the cilia. The chain is T-complex protein 1 subunit gamma (CCT3) from Bos taurus (Bovine).